The following is a 696-amino-acid chain: DNA ligase (696 aa).

Residues 55–59 (DYEFD), 105–106 (SL), and Glu137 contribute to the NAD(+) site. The N6-AMP-lysine intermediate role is filled by Lys139. NAD(+) is bound by residues Arg160, Glu194, Lys310, and Lys334. Zn(2+) is bound by residues Cys428, Cys431, Cys446, and Cys451. Residues 615 to 696 (NVNPNFVGKN…EFIELKDKFD (82 aa)) enclose the BRCT domain.

The protein belongs to the NAD-dependent DNA ligase family. LigA subfamily. Requires Mg(2+) as cofactor. It depends on Mn(2+) as a cofactor.

The catalysed reaction is NAD(+) + (deoxyribonucleotide)n-3'-hydroxyl + 5'-phospho-(deoxyribonucleotide)m = (deoxyribonucleotide)n+m + AMP + beta-nicotinamide D-nucleotide.. DNA ligase that catalyzes the formation of phosphodiester linkages between 5'-phosphoryl and 3'-hydroxyl groups in double-stranded DNA using NAD as a coenzyme and as the energy source for the reaction. It is essential for DNA replication and repair of damaged DNA. This chain is DNA ligase, found in Fusobacterium nucleatum subsp. nucleatum (strain ATCC 25586 / DSM 15643 / BCRC 10681 / CIP 101130 / JCM 8532 / KCTC 2640 / LMG 13131 / VPI 4355).